The following is a 248-amino-acid chain: 3-deoxy-manno-octulosonate cytidylyltransferase (248 aa).

It belongs to the KdsB family.

It is found in the cytoplasm. It carries out the reaction 3-deoxy-alpha-D-manno-oct-2-ulosonate + CTP = CMP-3-deoxy-beta-D-manno-octulosonate + diphosphate. It participates in nucleotide-sugar biosynthesis; CMP-3-deoxy-D-manno-octulosonate biosynthesis; CMP-3-deoxy-D-manno-octulosonate from 3-deoxy-D-manno-octulosonate and CTP: step 1/1. Its pathway is bacterial outer membrane biogenesis; lipopolysaccharide biosynthesis. Functionally, activates KDO (a required 8-carbon sugar) for incorporation into bacterial lipopolysaccharide in Gram-negative bacteria. The chain is 3-deoxy-manno-octulosonate cytidylyltransferase from Salmonella arizonae (strain ATCC BAA-731 / CDC346-86 / RSK2980).